Reading from the N-terminus, the 359-residue chain is 3-dehydroquinate synthase (359 aa).

NAD(+) contacts are provided by residues 71-76 (DGEQFK), 105-109 (GVIGD), 129-130 (TT), Lys-142, Lys-151, and 169-172 (CLQT). Zn(2+) contacts are provided by Glu-184, His-247, and His-264.

This sequence belongs to the sugar phosphate cyclases superfamily. Dehydroquinate synthase family. It depends on Co(2+) as a cofactor. Zn(2+) is required as a cofactor. NAD(+) serves as cofactor.

The protein resides in the cytoplasm. The catalysed reaction is 7-phospho-2-dehydro-3-deoxy-D-arabino-heptonate = 3-dehydroquinate + phosphate. It participates in metabolic intermediate biosynthesis; chorismate biosynthesis; chorismate from D-erythrose 4-phosphate and phosphoenolpyruvate: step 2/7. In terms of biological role, catalyzes the conversion of 3-deoxy-D-arabino-heptulosonate 7-phosphate (DAHP) to dehydroquinate (DHQ). The polypeptide is 3-dehydroquinate synthase (Shewanella sp. (strain ANA-3)).